A 329-amino-acid polypeptide reads, in one-letter code: D-alanine--D-alanine ligase (329 aa).

One can recognise an ATP-grasp domain in the interval 120–326 (KLWYDAIGIP…FHEFLADCIN (207 aa)). Residue 150 to 205 (AFDKWGKVFVKAARQGSSVGCYSVTNKQSVSQAVNDAFGYSEQVLVEKSVKPRELE) participates in ATP binding. Residues Asp280, Glu293, and Asn295 each contribute to the Mg(2+) site.

This sequence belongs to the D-alanine--D-alanine ligase family. It depends on Mg(2+) as a cofactor. Mn(2+) serves as cofactor.

It is found in the cytoplasm. It catalyses the reaction 2 D-alanine + ATP = D-alanyl-D-alanine + ADP + phosphate + H(+). It participates in cell wall biogenesis; peptidoglycan biosynthesis. Its function is as follows. Cell wall formation. In Vibrio campbellii (strain ATCC BAA-1116), this protein is D-alanine--D-alanine ligase.